Reading from the N-terminus, the 385-residue chain is Cyclin-A3-2 (385 aa).

The interval 1 to 110 (MADKENSTPA…STSTASPSSG (110 aa)) is disordered. Low complexity-rich tracts occupy residues 7–41 (STPA…GAPP), 74–88 (PSSK…AAAP), and 96–110 (PVSS…PSSG).

This sequence belongs to the cyclin family. Cyclin AB subfamily.

This Oryza sativa subsp. japonica (Rice) protein is Cyclin-A3-2 (CYCA3-2).